The sequence spans 88 residues: MKKDIHPDYHPVVFQDAGTGHQFLTKSTATSDRTVAWEDGNEYPLIVVDVTSESHPFWTGAQRVMDTAGRVEKFNQRYGALARRKKNK.

It belongs to the bacterial ribosomal protein bL31 family. Type B subfamily. In terms of assembly, part of the 50S ribosomal subunit.

The protein is Large ribosomal subunit protein bL31B of Corynebacterium diphtheriae (strain ATCC 700971 / NCTC 13129 / Biotype gravis).